A 449-amino-acid polypeptide reads, in one-letter code: Trigger factor (449 aa).

Residues 160–231 (TDQVTIEELG…VQSVQTKQLQ (72 aa)) enclose the PPIase FKBP-type domain. The segment at 411–449 (GQQVAGRQEAGAEQTAQAAEQESGQPQAEGEQAAEQRGE) is disordered. Over residues 415–443 (AGRQEAGAEQTAQAAEQESGQPQAEGEQA) the composition is skewed to low complexity.

The protein belongs to the FKBP-type PPIase family. Tig subfamily.

The protein localises to the cytoplasm. The catalysed reaction is [protein]-peptidylproline (omega=180) = [protein]-peptidylproline (omega=0). Functionally, involved in protein export. Acts as a chaperone by maintaining the newly synthesized protein in an open conformation. Functions as a peptidyl-prolyl cis-trans isomerase. This chain is Trigger factor, found in Deinococcus geothermalis (strain DSM 11300 / CIP 105573 / AG-3a).